The primary structure comprises 437 residues: Methylenetetrahydrofolate--tRNA-(uracil-5-)-methyltransferase TrmFO (437 aa).

10–15 (GAGLAG) lines the FAD pocket.

The protein belongs to the MnmG family. TrmFO subfamily. FAD serves as cofactor.

The protein localises to the cytoplasm. It carries out the reaction uridine(54) in tRNA + (6R)-5,10-methylene-5,6,7,8-tetrahydrofolate + NADH + H(+) = 5-methyluridine(54) in tRNA + (6S)-5,6,7,8-tetrahydrofolate + NAD(+). It catalyses the reaction uridine(54) in tRNA + (6R)-5,10-methylene-5,6,7,8-tetrahydrofolate + NADPH + H(+) = 5-methyluridine(54) in tRNA + (6S)-5,6,7,8-tetrahydrofolate + NADP(+). In terms of biological role, catalyzes the folate-dependent formation of 5-methyl-uridine at position 54 (M-5-U54) in all tRNAs. This is Methylenetetrahydrofolate--tRNA-(uracil-5-)-methyltransferase TrmFO from Lysinibacillus sphaericus (strain C3-41).